Reading from the N-terminus, the 898-residue chain is Serine/threonine-protein kinase TAO3 (898 aa).

Residues F24–V277 enclose the Protein kinase domain. Residues I30–V38 and K53 each bind ATP. D147 functions as the Proton acceptor in the catalytic mechanism. Disordered stretches follow at residues T316–S362 and D405–Q425. S324 bears the Phosphoserine; by ATM mark. Phosphoserine is present on residues S331, S343, S346, and S349. Residues G334–P351 are compositionally biased toward polar residues. Low complexity predominate over residues S352–S362. T357 carries the phosphothreonine modification. S359 bears the Phosphoserine mark. Over residues D405 to P416 the composition is skewed to basic and acidic residues. S442 is modified (phosphoserine). Coiled-coil stretches lie at residues E452–N502, F548–L649, and L754–S879. Residues E565 to E596 are disordered. Position 830 is an N6-acetyllysine (K830).

This sequence belongs to the protein kinase superfamily. STE Ser/Thr protein kinase family. STE20 subfamily. In terms of assembly, self-associates. Interacts with ERN1 and TRAF2. Interaction with TRAF2 is facilitated under ER stress conditions, such as treatment with tunicamycin, and may promote TRAF2 phosphorylation. Interacts (via N-terminus) with STK25; the interaction promotes STK25 abundance at the level of protein expression and/or stability. As to quaternary structure, (Microbial infection) Interacts with herpes simplex virus 1 UL37 protein. Post-translationally, autophosphorylated. Phosphorylation at Ser-324 by ATM following DNA damage is required for activation of the p38/MAPK14 stress-activated MAPK cascade. Phosphorylated at Ser-324 and on Tyr residues during T cell activation. Phosphorylated by LRRK2. In terms of tissue distribution, ubiquitously expressed at a low level, and highly expressed in peripheral blood leukocytes (PBLs), thymus, spleen, kidney, skeletal muscle, heart and liver.

Its subcellular location is the cytoplasm. The protein localises to the cell membrane. The protein resides in the membrane raft. It is found in the lipid droplet. It carries out the reaction L-seryl-[protein] + ATP = O-phospho-L-seryl-[protein] + ADP + H(+). The catalysed reaction is L-threonyl-[protein] + ATP = O-phospho-L-threonyl-[protein] + ADP + H(+). In terms of biological role, serine/threonine-protein kinase that acts as a regulator of the p38/MAPK14 stress-activated MAPK cascade and of the MAPK8/JNK cascade. In response to DNA damage, involved in the G2/M transition DNA damage checkpoint by activating the p38/MAPK14 stress-activated MAPK cascade, probably by mediating phosphorylation of upstream MAP2K3 and MAP2K6 kinases. Inhibits basal activity of the MAPK8/JNK cascade and diminishes its activation in response to epidermal growth factor (EGF). Positively regulates canonical T cell receptor (TCR) signaling by preventing early PTPN6/SHP1-mediated inactivation of LCK, ensuring sustained TCR signaling that is required for optimal activation and differentiation of T cells. Phosphorylates PTPN6/SHP1 on 'Thr-394', leading to its polyubiquitination and subsequent proteasomal degradation. Required for cell surface expression of metalloprotease ADAM10 on type 1 transitional B cells which is necessary for their NOTCH-mediated development into marginal zone B cells. Also required for the NOTCH-mediated terminal differentiation of splenic conventional type 2 dendritic cells. Positively regulates osteoblast differentiation by acting as an upstream activator of the JNK pathway. Promotes JNK signaling in hepatocytes and positively regulates hepatocyte lipid storage by inhibiting beta-oxidation and triacylglycerol secretion while enhancing lipid synthesis. Restricts age-associated inflammation by negatively regulating differentiation of macrophages and their production of pro-inflammatory cytokines. Plays a role in negatively regulating the abundance of regulatory T cells in white adipose tissue. This is Serine/threonine-protein kinase TAO3 (TAOK3) from Homo sapiens (Human).